Here is a 691-residue protein sequence, read N- to C-terminus: Threonine--tRNA ligase (691 aa).

Residues 1 to 66 (MSAPARPAPA…DADVDVIPVT (66 aa)) enclose the TGS domain. The tract at residues 265–571 (DHRKLGVELD…LTEHYAGAFP (307 aa)) is catalytic. Cys-370, His-421, and His-548 together coordinate Zn(2+).

The protein belongs to the class-II aminoacyl-tRNA synthetase family. Homodimer. Requires Zn(2+) as cofactor.

Its subcellular location is the cytoplasm. It catalyses the reaction tRNA(Thr) + L-threonine + ATP = L-threonyl-tRNA(Thr) + AMP + diphosphate + H(+). Catalyzes the attachment of threonine to tRNA(Thr) in a two-step reaction: L-threonine is first activated by ATP to form Thr-AMP and then transferred to the acceptor end of tRNA(Thr). Also edits incorrectly charged L-seryl-tRNA(Thr). This is Threonine--tRNA ligase from Mycolicibacterium vanbaalenii (strain DSM 7251 / JCM 13017 / BCRC 16820 / KCTC 9966 / NRRL B-24157 / PYR-1) (Mycobacterium vanbaalenii).